We begin with the raw amino-acid sequence, 208 residues long: Large ribosomal subunit protein uL3 (208 aa).

Residues 123–147 (RHGQSRGPMAHGSRYHRRPGSMGPV) are disordered.

It belongs to the universal ribosomal protein uL3 family. As to quaternary structure, part of the 50S ribosomal subunit. Forms a cluster with proteins L14 and L19.

Its function is as follows. One of the primary rRNA binding proteins, it binds directly near the 3'-end of the 23S rRNA, where it nucleates assembly of the 50S subunit. In Streptococcus uberis (strain ATCC BAA-854 / 0140J), this protein is Large ribosomal subunit protein uL3.